A 139-amino-acid chain; its full sequence is D-ribose pyranase (139 aa).

The Proton donor role is filled by His-20. Substrate is bound by residues Asp-28, His-106, and 128-130 (YAN).

It belongs to the RbsD / FucU family. RbsD subfamily. In terms of assembly, homodecamer.

Its subcellular location is the cytoplasm. It catalyses the reaction beta-D-ribopyranose = beta-D-ribofuranose. Its pathway is carbohydrate metabolism; D-ribose degradation; D-ribose 5-phosphate from beta-D-ribopyranose: step 1/2. Catalyzes the interconversion of beta-pyran and beta-furan forms of D-ribose. The protein is D-ribose pyranase of Histophilus somni (strain 2336) (Haemophilus somnus).